A 710-amino-acid chain; its full sequence is ARM REPEAT PROTEIN INTERACTING WITH ABF2 (710 aa).

Residues methionine 1 to isoleucine 35 are disordered. 9 ARM repeats span residues glutamate 85–serine 127, proline 138–histidine 185, serine 188–phenylalanine 227, aspartate 230–histidine 269, proline 272–serine 311, serine 314–glutamine 353, alanine 355–aspartate 394, leucine 429–serine 468, and glutamate 470–asparagine 509. The 68-residue stretch at serine 541–asparagine 608 folds into the BTB domain.

As to quaternary structure, interacts with ABF2. Interacts with DUF7/AIP1. In terms of tissue distribution, detected in embryos and most of the vegetative and reproductive organs.

The protein localises to the nucleus. Its pathway is protein modification; protein ubiquitination. Its function is as follows. May act as a substrate-specific adapter of an E3 ubiquitin-protein ligase complex (CUL3-RBX1-BTB) which mediates the ubiquitination and subsequent proteasomal degradation of target proteins. Acts as a positive regulator of ABA response via the modulation of the transcriptional activity of ABF2, a transcription factor which controls ABA-dependent gene expression via the G-box-type ABA-responsive elements. Negative regulator of seed germination and young seedling growth. The protein is ARM REPEAT PROTEIN INTERACTING WITH ABF2 (ARIA) of Arabidopsis thaliana (Mouse-ear cress).